A 520-amino-acid polypeptide reads, in one-letter code: Transactivator/viroplasmin protein (520 aa).

Positions 486–520 (VQDASADSGPKDGPPPTRSIVEKEDVPTTSSKQVD) are disordered.

Belongs to the caulimoviridae viroplasmin family.

The protein resides in the host cytoplasm. Functionally, enhances the ribosomal termination-reinitiation event leading to the translation of major open reading frames on the polycistronic viral RNAs. This Cauliflower mosaic virus (strain BBC) (CaMV) protein is Transactivator/viroplasmin protein.